A 378-amino-acid polypeptide reads, in one-letter code: UDP-N-acetylglucosamine--N-acetylmuramyl-(pentapeptide) pyrophosphoryl-undecaprenol N-acetylglucosamine transferase (378 aa).

Residues 24–26 (TAG), Asn144, Arg181, Ser215, and Gln310 contribute to the UDP-N-acetyl-alpha-D-glucosamine site.

The protein belongs to the glycosyltransferase 28 family. MurG subfamily.

The protein resides in the cell membrane. The catalysed reaction is di-trans,octa-cis-undecaprenyl diphospho-N-acetyl-alpha-D-muramoyl-L-alanyl-D-glutamyl-meso-2,6-diaminopimeloyl-D-alanyl-D-alanine + UDP-N-acetyl-alpha-D-glucosamine = di-trans,octa-cis-undecaprenyl diphospho-[N-acetyl-alpha-D-glucosaminyl-(1-&gt;4)]-N-acetyl-alpha-D-muramoyl-L-alanyl-D-glutamyl-meso-2,6-diaminopimeloyl-D-alanyl-D-alanine + UDP + H(+). Its pathway is cell wall biogenesis; peptidoglycan biosynthesis. Functionally, cell wall formation. Catalyzes the transfer of a GlcNAc subunit on undecaprenyl-pyrophosphoryl-MurNAc-pentapeptide (lipid intermediate I) to form undecaprenyl-pyrophosphoryl-MurNAc-(pentapeptide)GlcNAc (lipid intermediate II). This chain is UDP-N-acetylglucosamine--N-acetylmuramyl-(pentapeptide) pyrophosphoryl-undecaprenol N-acetylglucosamine transferase, found in Nocardia farcinica (strain IFM 10152).